An 825-amino-acid polypeptide reads, in one-letter code: MWSGDRRVGMESLSPERLHGHPYQEEASVFCRLTVKILEARSLPRADLLSQADPYVTVQLPTASGMKFKTQTVTNSSHPVWNETFSFLIQSQVKNILELTIYDEDVITKDDICFKVSYDVSEILPGQLLQKTFSLNPQGPEELDVELLMERTWDPPENLITNNVLVARELSHLDVSLDRAGNTAMAAGQDKLELELMLKGSYEDTQTFFPDTAFTFSFHYMRGQDTELNGYLRGPRNSGWNSDTSVTPFNVPLMSLAAGKEMTIDIPAMKAPEGKLQLKTDCCPKELSVRLSYGLCPEEQAFLSRRKKVVAAALKQALQLDEDLNEDEVPVVGINAEGGGMRAMISLYGHLLALQKLGLLDCVTYFSGISGSTWTMAHLYRDPEWSQRDLEGPISHAREHVAKTLLKEFLPEHLASYRQTLKLREEQGYTVTVADLWGLVLESKLHGQVTDQKLSGQRAALERGQNPLPLYLSLNVKENHLETLHFKEWVEFSPYEVGFLKYGGFVPSELFGSEFFMGRLMKRLPESQICFLEGIWSNLFSVNLMDIWYDITYGKDSNNFPVDVRNSEKEFSGSAGTSSGVEAPWLESGTALAQALKGFLTGRPFHQRSANFLHGLQLHRDYCNQRHFSTWADCNLDDTPNQLTPQDPQLCLIDAGCFMNSSCPSLFRPGRQVDLIISFNYNQSLPFKGLQQSEKYSRARGLPFPRVEPSPEDHSQPQECYLFSDPTCPEAPVVLHFPLVNDSFRDHSAPGVRRSPDELKAGQVNLTGAASPYFMYNMTYKNEDFDRLLQLSDYNVQNNQGTILQALRTVLKRRASETRPLGVKT.

The C2 domain occupies 14–133; that stretch reads SPERLHGHPY…LPGQLLQKTF (120 aa). Positions 47, 53, 103, 105, and 111 each coordinate Ca(2+). Residues 281 to 825 enclose the PLA2c domain; sequence DCCPKELSVR…SETRPLGVKT (545 aa). Position 339-340 (339-340) interacts with substrate; the sequence is GG. S370 serves as the catalytic Nucleophile. D654 (proton acceptor) is an active-site residue.

Ca(2+) serves as cofactor. As to expression, weakly or not expressed in most tissues. Detected in placenta of 17.5 dpc embryos.

It localises to the cytoplasm. It is found in the cytosol. The protein localises to the membrane. It catalyses the reaction a 1,2-diacyl-sn-glycero-3-phosphocholine + H2O = a 1-acyl-sn-glycero-3-phosphocholine + a fatty acid + H(+). The enzyme catalyses 1-hexadecanoyl-2-(5Z,8Z,11Z,14Z-eicosatetraenoyl)-sn-glycero-3-phosphocholine + H2O = 1-hexadecanoyl-sn-glycero-3-phosphocholine + (5Z,8Z,11Z,14Z)-eicosatetraenoate + H(+). The catalysed reaction is 1-hexadecanoyl-2-(9Z,12Z-octadecadienoyl)-sn-glycero-3-phosphocholine + H2O = (9Z,12Z)-octadecadienoate + 1-hexadecanoyl-sn-glycero-3-phosphocholine + H(+). It carries out the reaction 1-hexadecanoyl-2-(9Z-octadecenoyl)-sn-glycero-3-phosphocholine + H2O = 1-hexadecanoyl-sn-glycero-3-phosphocholine + (9Z)-octadecenoate + H(+). It catalyses the reaction 1-hexadecanoyl-2-(5Z,8Z,11Z,14Z-eicosatetraenoyl)-sn-glycero-3-phosphoethanolamine + H2O = 1-hexadecanoyl-sn-glycero-3-phosphoethanolamine + (5Z,8Z,11Z,14Z)-eicosatetraenoate + H(+). The enzyme catalyses 1-hexadecanoyl-2-(9Z,12Z-octadecadienoyl)-sn-glycero-3-phosphoethanolamine + H2O = 1-hexadecanoyl-sn-glycero-3-phosphoethanolamine + (9Z,12Z)-octadecadienoate + H(+). The catalysed reaction is 1-hexadecanoyl-sn-glycero-3-phosphocholine + H2O = sn-glycerol 3-phosphocholine + hexadecanoate + H(+). The protein operates within lipid metabolism; fatty acid metabolism. With respect to regulation, stimulated by cytosolic Ca(2+). Calcium-dependent phospholipase A2 that selectively hydrolyzes glycerophospholipids in the sn-2 position. Compared to its human ortholog, may have no preference for the fatty acid found at the sn-2 position. The polypeptide is Cytosolic phospholipase A2 delta (Mus musculus (Mouse)).